A 335-amino-acid polypeptide reads, in one-letter code: Foldase protein PrsA (335 aa).

The signal sequence occupies residues 1 to 20 (MKKKIFAGAVTLLSVAVLAA). Cys21 carries the N-palmitoyl cysteine lipid modification. Cys21 carries S-diacylglycerol cysteine lipidation. The PpiC domain occupies 142–239 (TPEVTAQIIK…ASYYIVKLVK (98 aa)). Residues 300-335 (TGSSTSSSSAASSSKTSESSSAAESSSKEASSSAAE) are disordered. The span at 302–335 (SSTSSSSAASSSKTSESSSAAESSSKEASSSAAE) shows a compositional bias: low complexity.

Belongs to the PrsA family.

It localises to the cell membrane. The enzyme catalyses [protein]-peptidylproline (omega=180) = [protein]-peptidylproline (omega=0). Functionally, plays a major role in protein secretion by helping the post-translocational extracellular folding of several secreted proteins. This is Foldase protein PrsA from Streptococcus sanguinis (strain SK36).